The following is a 2581-amino-acid chain: MGSIDNTARGSSASEPIAIIGMSAKFAGDATNTDNLWRMLIEGRSGWSPFPDSRFRSEGVYHPNNERLNSTHVKGAHFLAEDVGLFDAAFFGYSGETAASMDPQYRLQLESVYEALENAGLPLTKIAGSNTSVFTGVFVHDYRDGFLRDADNLPRLMATGTGVPMMANRVSHFFDLRGASMTIETACSSGMVAVHQAVQSLRTGEADMSIVGGANLTLNPDMFKALGSAGFLSADGKSYAFDSRASGYGRGEGVGTLVVKRLSDALAAGDPIRAVIRESMLNQDGKTETITSPSLEAQEALVRGCYQKAGLDPRETQYFEAHGTGTQAGDTIEAQGIATVFASRQEPLLIGSIKTNVGHTEAASGLASIIKTALAMENGVIPPSINFEKPNPKISLDDWNLKLVREVETWPAGPIRRASINNFGYGGSNAHIILEDSASWVKAIGGQNGRTNGFADGHSNGPNANGHHSTLDPHVQESQVISKVLVLSGKDKQACEKMTANLADYLRQTQSTNSNPRELLDSLIYTLGQRRSRFPWVVAHPIPVTEGYETVVQTLQSPKFKPTRTSRRPRIGMVFTGQGAQWNAMGRELIEAYPVFKASLQEAAGYLEQFGAEWSLMDELMRDAEKSRINEVGLSTPICVAVQISLVRLLRAWGIVPVAVTSHSSGEIAAAYSAGAVSYKTAMAFSYYRAVLAADKSLRGPVKGGMIAVGLGLEETESYLRRLSSEGQAAIACINSPSSITVSGDLSAVVELEDLANADGVFARRLKVDTAWHSHHMTPIANVYCEALENTRAEKIDRDALTTVAFSSPVTGGRITDAQQIARPEHWVESLVQPVQFVAAFTDMVLGGSGSVGSNVDVVVEVGPHTALGGPIQEILGLPEFKDLNIPYYGTLVRKLDARDSMHALASSLLREGYPVNMGAVNFAHGRGQYVKVLTNLPSYPWNHQAKHWAEPRLNRAIRERSQPPHDLLGSIVEGSNPNAPSWRHILRMSESPWTRDHAIQSNVIYPAAGYICLAIEASRQLHVLNQTAGEIGGYRLRDVDFLQALMIPDSSDGIEIQTTIRPVSEKDIASQGWRHFEVWSVTTDNRWTQHAKGLVSVELGESSVRMSRPARKNITGYTRRILPADLFANLRNLGITHGPVFQNMDSIIQSGSEMRSVVSMTLPDVSVPNDLPRNHILHPVTLDSVITAPYSAVPGAAAREITAKVPRSVERFWVSSKISHDAGHSLEADTTLIRDDDQGMAADVLVSDHDTGNIMLEMNGFSYQSLGRSTSLQKSESWPNELCNKVVWSLDISTPLPATLAAVRNELACTVQSAECDTTKATLRACIYFMQLALVALDSHDIAEMEQHNASYYTWMKDTVELASSGKLFEGSAEWLYHSENERQLHIEQVQTRLDGEIVCRLGTQLVDILRGHTGALDLVMQDNLLSRFYSYAPRWKRAGTQIAGLLRHLSHKNPRARILEVGAATGAIALHALGALGTSDSGGPNASMYHFTDTSTALFETARESLQPWADLLSFDELDIEHDPASQGYTPGTYDIVIASNIRSISESTSQALSNISSLLKPGGTLLLVEPLKYEVDVHFVRRLLPGRWWDDSTELKANLCLDMPSWENQLLSAGFTGVELELLDREDPQEAALVTFMSTVQLPQPPKSNVDADQVVIVTSRNGCPPAAWVKGLKDAIAAYTVSEGKLGPIVQDLESLAATAASYADKICIFLGEVDEGILYNLNSTLLEGIRSMSTNSKGLIWVTRGGAVDCERPEMSLATGFIRSLRNEYVGRKLLTLDLDPKGTPWSDVSMAAIAKILGTVIGNSAGGSMVEKGAVELEYAERDGVILIPRIYHDVTRNRMLSPDASDAAMEKISIENFYQPTRPLCLKPDLLVFGDDDFSADYLEHLPPASLEVQPKAYGATLNSVGDHIAGFECAGIITQVGEEAAAQGYAVGDRVLSVLRHSSFPSRAVVDWKLTTRMPTDMTFQEGASLPLSFLSAYFALVEIARLQRSRSVLIHAGAGDVGQAAIMVAQHLGAEVYVTVGSPAERGLLILKYGLPADHIFSCTDLSLANAVVAATQGRGVDVVLNSLTGPLFQESLNLVAPLGHFVEIGRRNTQTNGYMHMRPFDRGISFATLDIPSLLEYRAMDVHRCLAELTRLIELKAVTPVHPITFHAIGEIAEASRLLKAGDQIGKVVLSVDEHSTVTAVPSKPAAKLSSEVSYLIVGGSGGLAQSVAHWMVNRGARNLVLLSRSAGTSEKTAAFAEDLRQAGCRRVLPISCDVANEESLGDAINQCAQEGLPPIRGIIHAAFVLRDAFVEKMTLDDWTYTIQSKVAGTWNLHNQFNLPGDLDFFVLFSSINGILGYASQSAYSAAGAYEDALAHWRVKHCGLPAVSIDLSVVNAVGYVAEANASETLRRSLLRAGRRVIDEDHVLGSLESAILSPFDPQFVVGGINSGPGPHWDLDGDLGRDMRVLPLKYRPPAVTGQSQDDDSSSDSLAAKMIACESQGDAVRVVGTAIAEMLAEMFLVPIEDVDLGQSPSQQGVDSLVAVEVRNMLFSQAGAEVSIFNIMQSPSLTQLAIDVVDRSAHVKLAG.

Positions Ser-14–Asp-436 constitute a Ketosynthase family 3 (KS3) domain. Active-site for beta-ketoacyl synthase activity residues include Cys-187, His-322, and His-359. A malonyl-CoA:ACP transacylase (MAT) domain region spans residues Val-574 to Leu-868. The tract at residues His-966–Ser-1103 is N-terminal hotdog fold. The dehydratase (DH) domain stretch occupies residues His-966–Ser-1270. The PKS/mFAS DH domain occupies His-966–Leu-1273. His-998 (proton acceptor; for dehydratase activity) is an active-site residue. The interval Thr-1119–Leu-1273 is C-terminal hotdog fold. Asp-1184 acts as the Proton donor; for dehydratase activity in catalysis. The interval Leu-1461–Leu-1568 is methyltransferase (CMet) domain. The segment at Leu-1873–Leu-2184 is enoyl reductase (ER)domain. Positions Val-2207–Asn-2389 are ketoreductase (KR) domain. The region spanning Asp-2497–Ser-2574 is the Carrier domain. Ser-2534 is subject to O-(pantetheine 4'-phosphoryl)serine.

It functions in the pathway secondary metabolite biosynthesis. Its function is as follows. Highly reducing polyketide synthase; part of the gene cluster that mediates the biosynthesis of sorbicillinoids, a diverse group of yellow secondary metabolites that restrict growth of competing pathogenic fungi but not of bacteria. Sorbicillinoids biosynthesis requires the action of two PKSs. SorA iteratively combines three acetyl units and the growing chain is modified by the ketoacyl reductase subunit, and optional by the enoyl reductase subunit in the second cycle. The polyketide is then handed over to the PKS SorB, which adds three more acetyl units, and two methyl groups. SorB releases an aldehyde, which undergoes spontaneous cyclization resulting in the formation of sorbicillin or 2',3'-dihydrosorbicillin. The monooxygenase sorC oxidizes sorbicillin and 2',3'-dihydrosorbicillin to 2',3'-dihydrosorbicillinol and sorbicillinol, respectively. The oxidoreductase sorD further converts sorbicillinol into oxosorbicillinol. Sorbicillinol is the building block for the other sorbicillinoids such as disorbicillinol, bisvertinolon, and dihydrobisvertinolone. The protein is Highly reducing polyketide synthase sorA of Penicillium rubens (strain ATCC 28089 / DSM 1075 / NRRL 1951 / Wisconsin 54-1255) (Penicillium chrysogenum).